A 156-amino-acid chain; its full sequence is UPF0336 protein SACE_6876 (156 aa).

The 121-residue stretch at 8–128 folds into the MaoC-like domain; that stretch reads IGREYPPTPA…DFLTVRAEIT (121 aa).

The protein belongs to the UPF0336 family.

In Saccharopolyspora erythraea (strain ATCC 11635 / DSM 40517 / JCM 4748 / NBRC 13426 / NCIMB 8594 / NRRL 2338), this protein is UPF0336 protein SACE_6876.